Here is a 556-residue protein sequence, read N- to C-terminus: Phosphoacetylglucosamine mutase (556 aa).

Ser68 acts as the Phosphoserine intermediate in catalysis. Residues Ser68, Asp286, Asp288, and Asp290 each contribute to the Mg(2+) site. Position 68 is a phosphoserine (Ser68). Substrate-binding positions include 386 to 388 (EAN), 518 to 522 (RPSGT), and Arg527.

It belongs to the phosphohexose mutase family. The cofactor is Mg(2+).

It carries out the reaction N-acetyl-alpha-D-glucosamine 1-phosphate = N-acetyl-D-glucosamine 6-phosphate. It functions in the pathway nucleotide-sugar biosynthesis; UDP-N-acetyl-alpha-D-glucosamine biosynthesis; N-acetyl-alpha-D-glucosamine 1-phosphate from alpha-D-glucosamine 6-phosphate (route I): step 2/2. Interconverts GlcNAc-6-P and GlcNAc-1-P. In Arabidopsis thaliana (Mouse-ear cress), this protein is Phosphoacetylglucosamine mutase (DRT101).